The sequence spans 230 residues: Orotidine 5'-phosphate decarboxylase (230 aa).

Residues D10, K31, D58 to T67, T117, R179, Q188, G208, and R209 each bind substrate. Residue K60 is the Proton donor of the active site.

The protein belongs to the OMP decarboxylase family. Type 1 subfamily. Homodimer.

The catalysed reaction is orotidine 5'-phosphate + H(+) = UMP + CO2. It participates in pyrimidine metabolism; UMP biosynthesis via de novo pathway; UMP from orotate: step 2/2. Functionally, catalyzes the decarboxylation of orotidine 5'-monophosphate (OMP) to uridine 5'-monophosphate (UMP). The sequence is that of Orotidine 5'-phosphate decarboxylase from Staphylococcus aureus (strain Mu3 / ATCC 700698).